The primary structure comprises 79 residues: Tungsten-containing formylmethanofuran dehydrogenase 2 subunit G (79 aa).

2 consecutive 4Fe-4S ferredoxin-type domains span residues 2-31 and 51-79; these read VKIV…SPNV and TVSV…EIKT. The [4Fe-4S] cluster site is built by Cys-11, Cys-14, Cys-17, Cys-21, Cys-60, Cys-63, Cys-66, and Cys-70.

[4Fe-4S] cluster serves as cofactor.

The catalysed reaction is N-formylmethanofuran + 2 oxidized [2Fe-2S]-[ferredoxin] + H2O = methanofuran + 2 reduced [2Fe-2S]-[ferredoxin] + CO2 + H(+). It participates in one-carbon metabolism; methanogenesis from CO(2); 5,10-methenyl-5,6,7,8-tetrahydromethanopterin from CO(2): step 1/3. Its activity is regulated as follows. Not inactivated by cyanide. Catalyzes the reversible oxidation of CO(2) and methanofuran (MFR) to N-formylmethanofuran (CHO-MFR). This enzyme is oxygen-labile. May function as an electron transfer protein. The sequence is that of Tungsten-containing formylmethanofuran dehydrogenase 2 subunit G (fwdG) from Methanopyrus kandleri (strain AV19 / DSM 6324 / JCM 9639 / NBRC 100938).